A 554-amino-acid chain; its full sequence is Glypican-1 (554 aa).

The N-terminal stretch at 1–21 (MERLCWGWWWHLGILCLMHWA) is a signal peptide. Cystine bridges form between Cys-32–Cys-68, Cys-62–Cys-256, Cys-69–Cys-259, Cys-191–Cys-343, Cys-246–Cys-279, Cys-268–Cys-415, and Cys-272–Cys-401. N-linked (GlcNAc...) asparagine glycosylation is found at Asn-79 and Asn-116. The disordered stretch occupies residues 346-369 (PKKTNKGSKSEERRRKGKATQEDK). The segment covering 353 to 369 (SKSEERRRKGKATQEDK) has biased composition (basic and acidic residues). O-linked (Xyl...) (heparan sulfate) serine glycosylation is found at Ser-486, Ser-488, and Ser-490.

It belongs to the glypican family. O-glycosylated with heparan sulfate side chains.

It is found in the cell membrane. The protein localises to the secreted. Its subcellular location is the extracellular space. Its function is as follows. Cell surface proteoglycan that bears heparan sulfate. This Xenopus tropicalis (Western clawed frog) protein is Glypican-1 (gpc1).